The chain runs to 299 residues: Cysteine synthase B (299 aa).

Lys45 is subject to N6-(pyridoxal phosphate)lysine. Residues Asn75, 178-182 (GTTGT), and Ser259 each bind pyridoxal 5'-phosphate.

Belongs to the cysteine synthase/cystathionine beta-synthase family. Pyridoxal 5'-phosphate is required as a cofactor.

The catalysed reaction is O-acetyl-L-serine + hydrogen sulfide = L-cysteine + acetate. It functions in the pathway amino-acid biosynthesis; L-cysteine biosynthesis; L-cysteine from L-serine: step 2/2. This is Cysteine synthase B (cysM) from Pseudomonas aeruginosa (strain ATCC 15692 / DSM 22644 / CIP 104116 / JCM 14847 / LMG 12228 / 1C / PRS 101 / PAO1).